The chain runs to 282 residues: Ribosomal RNA small subunit methyltransferase A (282 aa).

His15, Leu17, Gly42, Glu64, Asp89, and Asn109 together coordinate S-adenosyl-L-methionine.

The protein belongs to the class I-like SAM-binding methyltransferase superfamily. rRNA adenine N(6)-methyltransferase family. RsmA subfamily.

Its subcellular location is the cytoplasm. The catalysed reaction is adenosine(1518)/adenosine(1519) in 16S rRNA + 4 S-adenosyl-L-methionine = N(6)-dimethyladenosine(1518)/N(6)-dimethyladenosine(1519) in 16S rRNA + 4 S-adenosyl-L-homocysteine + 4 H(+). Functionally, specifically dimethylates two adjacent adenosines (A1518 and A1519) in the loop of a conserved hairpin near the 3'-end of 16S rRNA in the 30S particle. May play a critical role in biogenesis of 30S subunits. The sequence is that of Ribosomal RNA small subunit methyltransferase A from Prochlorococcus marinus (strain MIT 9211).